The chain runs to 405 residues: Corticosteroid-binding globulin (405 aa).

Residues Met-1 to Ala-22 form the signal peptide. 4 N-linked (GlcNAc...) asparagine glycosylation sites follow: Asn-26, Asn-31, Asn-96, and Asn-260. Asn-286 serves as a coordination point for cortisol. 2 N-linked (GlcNAc...) asparagine glycosylation sites follow: Asn-330 and Asn-369. Trp-393 is a binding site for cortisol.

This sequence belongs to the serpin family. In terms of tissue distribution, expressed by the liver; secreted in plasma.

The protein localises to the secreted. In terms of biological role, major transport protein for glucocorticoids and progestins in the blood of almost all vertebrate species. The polypeptide is Corticosteroid-binding globulin (SERPINA6) (Pongo abelii (Sumatran orangutan)).